A 375-amino-acid chain; its full sequence is Probable RNA 3'-terminal phosphate cyclase-like protein (375 aa).

It belongs to the RNA 3'-terminal cyclase family. Type 2 subfamily.

It localises to the nucleus. It is found in the nucleolus. Its function is as follows. Does not have cyclase activity. Plays a role in 40S-ribosomal-subunit biogenesis in the early pre-rRNA processing steps at sites A0, A1 and A2 that are required for proper maturation of the 18S RNA. This is Probable RNA 3'-terminal phosphate cyclase-like protein from Arabidopsis thaliana (Mouse-ear cress).